The chain runs to 145 residues: D-aminoacyl-tRNA deacylase (145 aa).

The Gly-cisPro motif, important for rejection of L-amino acids signature appears at 137–138; it reads GP.

This sequence belongs to the DTD family. As to quaternary structure, homodimer.

The protein resides in the cytoplasm. The enzyme catalyses glycyl-tRNA(Ala) + H2O = tRNA(Ala) + glycine + H(+). It carries out the reaction a D-aminoacyl-tRNA + H2O = a tRNA + a D-alpha-amino acid + H(+). An aminoacyl-tRNA editing enzyme that deacylates mischarged D-aminoacyl-tRNAs. Also deacylates mischarged glycyl-tRNA(Ala), protecting cells against glycine mischarging by AlaRS. Acts via tRNA-based rather than protein-based catalysis; rejects L-amino acids rather than detecting D-amino acids in the active site. By recycling D-aminoacyl-tRNA to D-amino acids and free tRNA molecules, this enzyme counteracts the toxicity associated with the formation of D-aminoacyl-tRNA entities in vivo and helps enforce protein L-homochirality. This is D-aminoacyl-tRNA deacylase from Shewanella piezotolerans (strain WP3 / JCM 13877).